A 970-amino-acid polypeptide reads, in one-letter code: Disease resistance protein RGA2 (970 aa).

One can recognise an NB-ARC domain in the interval 135-438 (RQAVRRETGS…MAHGFLLSKG (304 aa)). Residue 182-189 (GMGGLGKT) participates in ATP binding. LRR repeat units lie at residues 525–548 (FISL…IGDL), 550–571 (HLRY…LCKL), 573–594 (NLQT…ETSK), 595–619 (LGSL…IGSL), 638–662 (LGEL…KNDK), 672–697 (KGNL…EVKV), 752–777 (LPCL…DIDV), 787–811 (FPSL…EGEE), 813–832 (FPVL…LSSN), 833–857 (LRAL…MFKN), 859–882 (ANLK…LASL), 884–906 (ALKS…GLEG), 907–931 (LSSL…LQHL), and 946–970 (IKRC…NIYI).

This sequence belongs to the disease resistance NB-LRR family.

Disease resistance protein. Resistance proteins guard the plant against pathogens that contain an appropriate avirulence protein via a direct or indirect interaction with this avirulence protein. That triggers a defense system which restricts the pathogen growth. Confers a broad resistance to all known races of P.infestans. The chain is Disease resistance protein RGA2 (RGA2) from Solanum bulbocastanum (Wild potato).